Reading from the N-terminus, the 1943-residue chain is Beta-L-arabinobiosidase (1943 aa).

Positions 1-32 (MHHSTRKRWLASIGAVAAVATLATGGAVTAQA) form a signal peptide, tat-type signal. 2 F5/8 type C domains span residues 892 to 1049 (TNVD…AYNT) and 1142 to 1302 (SKEI…AYAI). One can recognise a PKD domain in the interval 1061–1157 (TPQVDAYVSS…HGIPSDGTVN (97 aa)). FIVAR domains follow at residues 1678–1716 (ANGLDASRYTAASWAEFQQIIDAAQAVYDDANATAEQVA), 1746–1790 (DAAK…AAVQ), and 1823–1864 (QAKK…VDAA). Positions 1875-1906 (TKVEQKPGSQQPGVTDTDKDDKDNKGDRVPPT) are disordered. The span at 1890–1902 (DTDKDDKDNKGDR) shows a compositional bias: basic and acidic residues. The helical transmembrane segment at 1908 to 1928 (AAVSVVAAAAVLLTAAGVTIL) threads the bilayer.

This sequence belongs to the glycosyl hydrolase 121 family. Predicted to be exported by the Tat system. The position of the signal peptide cleavage has not been experimentally proven.

The protein localises to the membrane. The catalysed reaction is 4-O-(beta-L-arabinofuranosyl-(1-&gt;2)-beta-L-arabinofuranosyl-(1-&gt;2)-beta-L-arabinofuranosyl)-(2S,4S)-4-hydroxyproline + H2O = 4-O-(beta-L-arabinofuranosyl)-(2S,4S)-4-hydroxyproline + beta-L-arabinofuranosyl-(1-&gt;2)-beta-L-arabinofuranose. Its function is as follows. Beta-L-arabinobiosidase that removes L-arabinofuranose-beta-1,2-L-arabinofuranose disaccharide from various substrates such as carrot extensin and potato lectin. Also acts on L-arabinofuranose (Ara)-beta-1,2-Ara-beta-1,2-Ara-beta-Hyp (Ara(3)-Hyp) but not on Ara-beta-1,3-Ara-beta-1,2-Ara-beta-1,2-Ara-beta--Hyp (Ara(4)-Hyp) or Ara-beta-1,2-Ara-beta-Hyp (Ara(2)-Hyp), suggesting a specificity for unmodified Ara(3)-Hyp substrate. In the presence of 1-alkanols, shows transglycosylation activity, retaining the anomeric configuration of the arabinofuranose residue. This Bifidobacterium longum subsp. longum (strain ATCC 15707 / DSM 20219 / JCM 1217 / NCTC 11818 / E194b) protein is Beta-L-arabinobiosidase (hypBA2).